A 250-amino-acid chain; its full sequence is Small ribosomal subunit protein uS3 (250 aa).

A KH type-2 domain is found at 39-111 (IRTLIKNHYP…KVQINIFEVK (73 aa)).

This sequence belongs to the universal ribosomal protein uS3 family. In terms of assembly, part of the 30S ribosomal subunit. Forms a tight complex with proteins S10 and S14.

Functionally, binds the lower part of the 30S subunit head. Binds mRNA in the 70S ribosome, positioning it for translation. The chain is Small ribosomal subunit protein uS3 from Rubus stunt phytoplasma.